The chain runs to 664 residues: Glycine--tRNA ligase beta subunit (664 aa).

This sequence belongs to the class-II aminoacyl-tRNA synthetase family. Tetramer of two alpha and two beta subunits.

Its subcellular location is the cytoplasm. The enzyme catalyses tRNA(Gly) + glycine + ATP = glycyl-tRNA(Gly) + AMP + diphosphate. The chain is Glycine--tRNA ligase beta subunit from Rickettsia felis (strain ATCC VR-1525 / URRWXCal2) (Rickettsia azadi).